The chain runs to 276 residues: Large ribosomal subunit protein uL2 (276 aa).

Positions 224 to 276 (AMNPIDHPHGGGEGKTSGGRNPVTPWGVSTKGKKTRKKNKSSNKYIKRVSDKG) are disordered. The span at 254 to 270 (KGKKTRKKNKSSNKYIK) shows a compositional bias: basic residues.

It belongs to the universal ribosomal protein uL2 family. Part of the 50S ribosomal subunit. Forms a bridge to the 30S subunit in the 70S ribosome.

In terms of biological role, one of the primary rRNA binding proteins. Required for association of the 30S and 50S subunits to form the 70S ribosome, for tRNA binding and peptide bond formation. It has been suggested to have peptidyltransferase activity; this is somewhat controversial. Makes several contacts with the 16S rRNA in the 70S ribosome. The chain is Large ribosomal subunit protein uL2 from Ehrlichia ruminantium (strain Gardel).